The following is a 577-amino-acid chain: Urease subunit alpha (577 aa).

Positions 136-577 (GGIDCHVHFI…LPMAQRYFLF (442 aa)) constitute a Urease domain. Residues H141, H143, and K224 each contribute to the Ni(2+) site. Residue K224 is modified to N6-carboxylysine. Residue H226 participates in substrate binding. The Ni(2+) site is built by H253 and H279. H327 (proton donor) is an active-site residue. Residue D367 participates in Ni(2+) binding.

This sequence belongs to the metallo-dependent hydrolases superfamily. Urease alpha subunit family. In terms of assembly, heterotrimer of UreA (gamma), UreB (beta) and UreC (alpha) subunits. Three heterotrimers associate to form the active enzyme. The cofactor is Ni cation. In terms of processing, carboxylation allows a single lysine to coordinate two nickel ions.

The protein resides in the cytoplasm. It carries out the reaction urea + 2 H2O + H(+) = hydrogencarbonate + 2 NH4(+). It participates in nitrogen metabolism; urea degradation; CO(2) and NH(3) from urea (urease route): step 1/1. This is Urease subunit alpha from Mycobacteroides abscessus (strain ATCC 19977 / DSM 44196 / CCUG 20993 / CIP 104536 / JCM 13569 / NCTC 13031 / TMC 1543 / L948) (Mycobacterium abscessus).